Here is a 97-residue protein sequence, read N- to C-terminus: HssA/B-like protein 32 (97 aa).

Disordered stretches follow at residues 1–23 (MTLF…SLAS) and 62–97 (AKSS…GSCS). The span at 62–74 (AKSSGGSCGGKGG) shows a compositional bias: gly residues. Positions 75–88 (SHNHGHGHGPHGHG) are enriched in basic residues.

The protein belongs to the hssA/B family.

The chain is HssA/B-like protein 32 (hssl32) from Dictyostelium discoideum (Social amoeba).